A 247-amino-acid chain; its full sequence is 5-oxoprolinase subunit A (247 aa).

This sequence belongs to the LamB/PxpA family. Forms a complex composed of PxpA, PxpB and PxpC.

The enzyme catalyses 5-oxo-L-proline + ATP + 2 H2O = L-glutamate + ADP + phosphate + H(+). Functionally, catalyzes the cleavage of 5-oxoproline to form L-glutamate coupled to the hydrolysis of ATP to ADP and inorganic phosphate. In Ralstonia pickettii (strain 12J), this protein is 5-oxoprolinase subunit A.